The chain runs to 151 residues: Large ribosomal subunit protein bL9 (151 aa).

This sequence belongs to the bacterial ribosomal protein bL9 family.

Functionally, binds to the 23S rRNA. The sequence is that of Large ribosomal subunit protein bL9 from Desulforapulum autotrophicum (strain ATCC 43914 / DSM 3382 / VKM B-1955 / HRM2) (Desulfobacterium autotrophicum).